Here is a 472-residue protein sequence, read N- to C-terminus: Ulvan lyase (472 aa).

A signal peptide spans 1 to 21 (MIIKQYLLKISLCVLLLGCDS). The substrate site is built by Asn46 and Asn109. The Proton donor role is filled by His110. Substrate contacts are provided by Lys112 and His130. Tyr175 serves as the catalytic Proton acceptor. Residues Arg191, His195, and Tyr233 each contribute to the substrate site. His195 is a Zn(2+) binding site. Residues His251, Cys253, and His265 each coordinate Zn(2+). Residue His265 participates in substrate binding.

Belongs to the polysaccharide lyase 25 family.

Functionally, ulvan lyase involved in ulvan degradation. Ulvan is the main polysaccharide component of the Ulvales (green seaweed) cell wall. It is composed of disaccharide building blocks comprising 3-sulfated rhamnose (Rha3S) linked to D-glucuronic acid (GlcA), L-iduronic acid (IduA), or D-xylose (Xyl). Ulvan lyase catalyzes the endolytic cleavage of the glycosidic bond between Rha3S and the uronic acids GlcA or IduA, producing oligosaccharides that have unsaturated 4-deoxy-L-threo-hex-4-enopyranosiduronic acid (deltaUA) at the non-reducing end. This results eventually in the degradation of the ulvan polysaccharide into deltaUA-Rha3S disaccharides and deltaUA-Rha3S-Xyl-Rha3S tetrasaccharides. This is Ulvan lyase from Nonlabens ulvanivorans (Persicivirga ulvanivorans).